The sequence spans 450 residues: Probable malate:quinone oxidoreductase (450 aa).

The protein belongs to the MQO family. Requires FAD as cofactor.

The enzyme catalyses (S)-malate + a quinone = a quinol + oxaloacetate. It functions in the pathway carbohydrate metabolism; tricarboxylic acid cycle; oxaloacetate from (S)-malate (quinone route): step 1/1. The chain is Probable malate:quinone oxidoreductase from Helicobacter pylori (strain P12).